The primary structure comprises 540 residues: V-set and immunoglobulin domain-containing protein 10 (540 aa).

The N-terminal stretch at Met-1–Ala-30 is a signal peptide. Ig-like C2-type domains lie at Val-31–Val-119, Pro-123–Thr-215, Pro-223–Arg-309, and Pro-311–Ser-404. The Extracellular segment spans residues Val-31–Gly-413. Asn-39, Asn-46, Asn-70, Asn-108, Asn-138, Asn-171, Asn-180, and Asn-198 each carry an N-linked (GlcNAc...) asparagine glycan. Cys-44 and Cys-103 are joined by a disulfide. 2 disulfides stabilise this stretch: Cys-153/Cys-201 and Cys-245/Cys-290. An N-linked (GlcNAc...) asparagine glycan is attached at Asn-326. Cys-331 and Cys-388 are joined by a disulfide. A helical membrane pass occupies residues Ile-414–Leu-434. Topologically, residues His-435 to Val-540 are cytoplasmic. A compositionally biased stretch (acidic residues) spans Asp-461–Ala-477. Disordered regions lie at residues Asp-461–Ile-500 and Gln-513–Val-540. Basic and acidic residues predominate over residues Glu-482–Ile-500. Positions Leu-521–Gln-534 are enriched in acidic residues.

The protein resides in the membrane. This Homo sapiens (Human) protein is V-set and immunoglobulin domain-containing protein 10 (VSIG10).